A 52-amino-acid polypeptide reads, in one-letter code: KRGVTLREDDRFPCNAGNCACLPLDSYSYTCLSPTSSTANCESDECVSEDDW.

Positions 1 to 6 (KRGVTL) are excised as a propeptide. 3 disulfide bridges follow: Cys14–Cys31, Cys19–Cys41, and Cys21–Cys46.

In terms of tissue distribution, expressed by the venom duct.

The protein localises to the secreted. Functionally, probable neurotoxin with unknown target. Possibly targets ion channels. The polypeptide is Conotoxin Cal9.2d (Californiconus californicus (California cone)).